Consider the following 62-residue polypeptide: 6.7 kDa chloroplast outer envelope membrane protein (62 aa).

Residues M1 to Q17 lie on the Chloroplast intermembrane side of the membrane. A helical membrane pass occupies residues A18–F40. The Cytoplasmic portion of the chain corresponds to N41–T62.

It localises to the plastid. Its subcellular location is the chloroplast outer membrane. The protein is 6.7 kDa chloroplast outer envelope membrane protein of Spinacia oleracea (Spinach).